The sequence spans 1750 residues: Brefeldin A-inhibited guanine nucleotide-exchange protein 3 (1750 aa).

An N-acetylalanine modification is found at Ala-2. 2 disordered regions span residues 44-65 (LRSPENSSPVADSESGSSIPGP) and 565-596 (EEGSHPVENGKGDGGHGGFERSDSQSELSSGN). A compositionally biased stretch (polar residues) spans 47–61 (PENSSPVADSESGSS). Positions 565–588 (EEGSHPVENGKGDGGHGGFERSDS) are enriched in basic and acidic residues. A Phosphoserine modification is found at Ser-586. Residues 601–788 (AIEQRRAYKL…RALYERISRN (188 aa)) enclose the SEC7 domain. Glu-703 is a catalytic residue. At Ser-1307 the chain carries Phosphoserine.

As to quaternary structure, homodimer.

The protein localises to the cytoplasm. Its subcellular location is the cytosol. The protein resides in the membrane. With respect to regulation, inhibited by brefeldin A. Functionally, activates the ARF proteins by exchanging bound GDP for free GTP. Plays a role in vesicular protein sorting. Involved both in the nuclear division phase and in the nuclear fusion phase. In Arabidopsis thaliana (Mouse-ear cress), this protein is Brefeldin A-inhibited guanine nucleotide-exchange protein 3 (BIG3).